The chain runs to 339 residues: MNTNPASMAVIGAGSYGTALAITLARNGHQVVLWGHDPKHIQQLQQDRCNRAFLPDAAFPDTLRLETDLACALAASRDVLVVVPSHVFGAVLHQLKPHLRKDARIVWATKGLEAETGRLLQDVAREVLGEAIPLAVISGPTFAKELAAGLPTAIALASTDVQFSEDLQQLLHCGKSFRVYSNPDFIGVQLGGAVKNVIAIGAGMSDGIGFGANARTALITRGLAEMTRLGTALGADPSTFMGMAGLGDLVLTCTDNQSRNRRFGIMLGQGLGVKEAQDNIGQVVEGYRNTKEVLALAQRHGVEMPITEQIYQVLYCHKNAREAALTLLGRTKKDEKIGI.

Residues S15, Y16, H36, and K110 each contribute to the NADPH site. The sn-glycerol 3-phosphate site is built by K110, G139, and T141. A143 is a binding site for NADPH. Positions 195, 248, 258, 259, and 260 each coordinate sn-glycerol 3-phosphate. The Proton acceptor role is filled by K195. R259 is an NADPH binding site. The NADPH site is built by V283 and E285.

Belongs to the NAD-dependent glycerol-3-phosphate dehydrogenase family.

The protein localises to the cytoplasm. It catalyses the reaction sn-glycerol 3-phosphate + NAD(+) = dihydroxyacetone phosphate + NADH + H(+). The enzyme catalyses sn-glycerol 3-phosphate + NADP(+) = dihydroxyacetone phosphate + NADPH + H(+). The protein operates within membrane lipid metabolism; glycerophospholipid metabolism. Functionally, catalyzes the reduction of the glycolytic intermediate dihydroxyacetone phosphate (DHAP) to sn-glycerol 3-phosphate (G3P), the key precursor for phospholipid synthesis. This Yersinia pseudotuberculosis serotype O:1b (strain IP 31758) protein is Glycerol-3-phosphate dehydrogenase [NAD(P)+].